A 304-amino-acid chain; its full sequence is E3 ubiquitin-protein ligase CCNB1IP1 homolog (304 aa).

Residues 3–42 (CNACWRDLEGRAISTTCGHLLCTEDASKILSNDGACPICD) form an RING-type; degenerate zinc finger. A coiled-coil region spans residues 124–184 (TAYQKMGKRC…YESVKRTAIQ (61 aa)). The disordered stretch occupies residues 218–279 (SFFSPATPGP…GGGGTANPQS (62 aa)). Residues 235-250 (RQNSSNSGPFDISTDS) are compositionally biased toward polar residues.

Expressed mostly in flower buds and roots.

It localises to the nucleus. The protein resides in the chromosome. The enzyme catalyses S-ubiquitinyl-[E2 ubiquitin-conjugating enzyme]-L-cysteine + [acceptor protein]-L-lysine = [E2 ubiquitin-conjugating enzyme]-L-cysteine + N(6)-ubiquitinyl-[acceptor protein]-L-lysine.. It participates in protein modification; protein ubiquitination. Functionally, ubiquitin E3 ligase required for class I crossover (CO) formation during meiosis. This is E3 ubiquitin-protein ligase CCNB1IP1 homolog (HEI10) from Arabidopsis thaliana (Mouse-ear cress).